A 159-amino-acid polypeptide reads, in one-letter code: MSTQSVVETVTALVKPILDDHHFYLTDVEFVKEGGGWYLRVYIDKTGGITLDECVMVSEALSEKLDAMDPDPIPQQYFLEVSSPGAERPLKHETDYEQAVGDYIHVSLFKKLDGKKVFEGTLKELLPDQLTLTVKDKSRKFDQVIDRQLIASARLAIEF.

The protein belongs to the RimP family.

The protein resides in the cytoplasm. In terms of biological role, required for maturation of 30S ribosomal subunits. This chain is Ribosome maturation factor RimP, found in Lacticaseibacillus casei (strain BL23) (Lactobacillus casei).